A 306-amino-acid chain; its full sequence is Dihydroorotate dehydrogenase B (NAD(+)), catalytic subunit (306 aa).

FMN-binding positions include serine 24 and 48–49; that span reads KA. Substrate is bound by residues lysine 48 and 72–76; that span reads NAIGL. FMN contacts are provided by asparagine 102 and asparagine 130. Asparagine 130 is a substrate binding site. Cysteine 133 functions as the Nucleophile in the catalytic mechanism. Residues lysine 168 and isoleucine 194 each contribute to the FMN site. 195 to 196 is a substrate binding site; it reads NT. FMN-binding positions include glycine 220, 246-247, and 268-269; these read GG and GT.

It belongs to the dihydroorotate dehydrogenase family. Type 1 subfamily. As to quaternary structure, heterotetramer of 2 PyrK and 2 PyrD type B subunits. FMN is required as a cofactor.

The protein resides in the cytoplasm. The enzyme catalyses (S)-dihydroorotate + NAD(+) = orotate + NADH + H(+). The protein operates within pyrimidine metabolism; UMP biosynthesis via de novo pathway; orotate from (S)-dihydroorotate (NAD(+) route): step 1/1. Catalyzes the conversion of dihydroorotate to orotate with NAD(+) as electron acceptor. The sequence is that of Dihydroorotate dehydrogenase B (NAD(+)), catalytic subunit (pyrD) from Malacoplasma penetrans (strain HF-2) (Mycoplasma penetrans).